A 290-amino-acid polypeptide reads, in one-letter code: Probable endonuclease 4 (290 aa).

Zn(2+) is bound by residues His69, His109, Glu145, Asp179, His182, His216, Asp229, His231, and Glu261.

This sequence belongs to the AP endonuclease 2 family. Zn(2+) is required as a cofactor.

The enzyme catalyses Endonucleolytic cleavage to 5'-phosphooligonucleotide end-products.. Functionally, endonuclease IV plays a role in DNA repair. It cleaves phosphodiester bonds at apurinic or apyrimidinic (AP) sites, generating a 3'-hydroxyl group and a 5'-terminal sugar phosphate. This is Probable endonuclease 4 from Chlorobium limicola (strain DSM 245 / NBRC 103803 / 6330).